The sequence spans 139 residues: UPF0216 protein MJ1224 (139 aa).

It belongs to the UPF0216 family.

This chain is UPF0216 protein MJ1224, found in Methanocaldococcus jannaschii (strain ATCC 43067 / DSM 2661 / JAL-1 / JCM 10045 / NBRC 100440) (Methanococcus jannaschii).